The primary structure comprises 80 residues: Crustacean hyperglycemic hormones (80 aa).

3 cysteine pairs are disulfide-bonded: C13–C49, C29–C45, and C32–C58. A Valine amide modification is found at V78.

It belongs to the arthropod CHH/MIH/GIH/VIH hormone family. In terms of tissue distribution, produced by the medulla terminalis X-organ in the eyestalks and transported to the sinus gland where they are stored and released.

The protein localises to the secreted. Hormone found in the sinus gland of isopods and decapods which controls the blood sugar level. Has a secretagogue action over the amylase released from the midgut gland. May act as a stress hormone and may be involved in the control of molting and reproduction. The polypeptide is Crustacean hyperglycemic hormones (Penaeus vannamei (Whiteleg shrimp)).